Consider the following 653-residue polypeptide: Beta-galactosidase (653 aa).

Positions 1–22 are cleaved as a signal peptide; that stretch reads MPGVVRLLALLLVPLLLGSARG. A propeptide spanning residues 23–27 is cleaved from the precursor; the sequence is LHNAT. Asn-25 is a glycosylation site (N-linked (GlcNAc...) asparagine). Residue Tyr-82 coordinates substrate. The N-linked (GlcNAc...) asparagine glycan is linked to Asn-96. Substrate-binding residues include Glu-128 and Asn-186. The active-site Proton donor is the Glu-187. A disulfide bridge connects residues Cys-194 and Cys-229. Asn-246 carries N-linked (GlcNAc...) asparagine glycosylation. Catalysis depends on Glu-267, which acts as the Nucleophile. Position 332 (Tyr-332) interacts with substrate. N-linked (GlcNAc...) asparagine glycosylation is found at Asn-463, Asn-497, and Asn-554. An intrachain disulfide couples Cys-625 to Cys-633.

It belongs to the glycosyl hydrolase 35 family. As to quaternary structure, homodimer. May form higher multimers.

It localises to the lysosome. It catalyses the reaction Hydrolysis of terminal non-reducing beta-D-galactose residues in beta-D-galactosides.. Its function is as follows. Cleaves beta-linked terminal galactosyl residues from gangliosides, glycoproteins, and glycosaminoglycans. In Bos taurus (Bovine), this protein is Beta-galactosidase (GLB1).